Consider the following 323-residue polypeptide: Movement protein (323 aa).

Residues serine 292–asparagine 322 adopt a coiled-coil conformation.

This sequence belongs to the caulimoviridae movement protein family. As to quaternary structure, homotrimer, through the coiled-coil domain. Interacts with VAP.

The protein resides in the host cell junction. The protein localises to the host plasmodesma. Functionally, transports viral genome to neighboring plant cells directly through plasmosdesmata, without any budding. The movement protein allows efficient cell to cell propagation, by bypassing the host cell wall barrier. Acts by forming tubules structures that increase the size exclusion limit (SEL) of plasmodesmata, thereby allowing viral ribonucleocapsids to spread directly to neighboring cells. The protein is Movement protein of Figwort mosaic virus (strain DxS) (FMV).